The chain runs to 617 residues: DNA double-strand break repair protein Mre11 (617 aa).

4 residues coordinate Mn(2+): Asp-12, His-14, Asp-53, and Asn-88. The Proton donor role is filled by His-89. Mn(2+) contacts are provided by His-158, Asp-189, and His-191. Residues 395–432 (SPVDPSSSVSSIESSGSVSPIDSVSTVSPSSPSSSAII) are compositionally biased toward low complexity. Disordered regions lie at residues 395 to 437 (SPVD…EPEE) and 513 to 617 (VEDE…GDYL). Polar residues predominate over residues 529–547 (APQSSSPVSFSDNSQTGFS). Over residues 549–559 (ISPPESIPSPE) the composition is skewed to low complexity. Basic and acidic residues predominate over residues 560–583 (ILKENSEADADEKPVDGKLSEEKP).

Belongs to the MRE11/RAD32 family. As to quaternary structure, homodimer. Forms a heterotetramer composed of two Mre11 subunits and two Rad50 subunits. Mn(2+) serves as cofactor.

Its activity is regulated as follows. Nuclease activity is regulated by Rad50. In terms of biological role, part of the Rad50/Mre11 complex, which is involved in the early steps of DNA double-strand break (DSB) repair. The complex may facilitate opening of the processed DNA ends to aid in the recruitment of HerA and NurA. Mre11 binds to DSB ends and has both double-stranded 3'-5' exonuclease activity and single-stranded endonuclease activity. This chain is DNA double-strand break repair protein Mre11, found in Methanosarcina mazei (strain ATCC BAA-159 / DSM 3647 / Goe1 / Go1 / JCM 11833 / OCM 88) (Methanosarcina frisia).